A 154-amino-acid chain; its full sequence is Transcriptional repressor NrdR (154 aa).

Residues 1–22 (MRCPFCAHDDSQVKDSRPTDDG) are disordered. Residues 3–34 (CPFCAHDDSQVKDSRPTDDGAAIRRRRQCEGC) fold into a zinc finger. Over residues 7-22 (AHDDSQVKDSRPTDDG) the composition is skewed to basic and acidic residues. The 91-residue stretch at 49 to 139 (MTVVKSDGRR…VYKDFREAKD (91 aa)) folds into the ATP-cone domain.

Belongs to the NrdR family. The cofactor is Zn(2+).

Functionally, negatively regulates transcription of bacterial ribonucleotide reductase nrd genes and operons by binding to NrdR-boxes. The protein is Transcriptional repressor NrdR of Rhizorhabdus wittichii (strain DSM 6014 / CCUG 31198 / JCM 15750 / NBRC 105917 / EY 4224 / RW1) (Sphingomonas wittichii).